The primary structure comprises 454 residues: UDP-glycosyltransferase 79A2 (454 aa).

UDP-alpha-D-glucose-binding positions include Ser269, 330 to 331 (WV), 348 to 356 (HAGYGSVIE), and 370 to 373 (KVDQ).

It belongs to the UDP-glycosyltransferase family.

In terms of biological role, may glycosylate diterpenes or flavonols in leaves. In Stevia rebaudiana (Stevia), this protein is UDP-glycosyltransferase 79A2.